Consider the following 1784-residue polypeptide: Protein mel-28 (1784 aa).

The tract at residues 1 to 956 is required for nuclear envelope and kinetochore localization; that stretch reads MDNENSSIFK…QNDDEDMPEV (956 aa). Positions 566–778 are required for association with mitotic chromosomes; the sequence is GKIEEFCQLA…TSPEDSEHSE (213 aa). Residues 846–1071 form an important for nuclear localization region; it reads APMTVTIGKH…HNSILKTAKG (226 aa). Disordered regions lie at residues 945 to 994 and 1115 to 1784; these read KVQN…AKRI and ETMT…RAKQ. Over residues 1126-1149 the composition is skewed to basic and acidic residues; sequence GKHDEEKDSEKNVVDEMEEVKDQE. Acidic residues-rich tracts occupy residues 1222-1232 and 1266-1278; these read LEEEGEDEDIW and VNEEEVVESEEVQ. Residues 1239–1601 form a chromatin binding region; it reads FEVQMDEDCE…TTVDPSSSAL (363 aa). The segment covering 1279–1293 has biased composition (basic and acidic residues); sequence QDAKEPEKTEKRQEE. Residues 1297–1306 are compositionally biased toward low complexity; that stretch reads EVMQPVIPEE. Residues 1321-1336 are compositionally biased toward acidic residues; the sequence is ELQEEPDIVPTGDEDT. Residues 1337–1351 are compositionally biased toward basic and acidic residues; sequence ADKVQEQAVEEDRPP. The span at 1352–1366 shows a compositional bias: polar residues; it reads SRNTRSSSVQKSTSQ. Positions 1367-1382 are enriched in basic and acidic residues; that stretch reads VEDRDPKELVEEERPP. The span at 1383-1398 shows a compositional bias: polar residues; that stretch reads SRNTRSASVQKSSNQE. Residues 1428–1444 show a composition bias toward basic and acidic residues; sequence KVKDQKPEELIEEDRPP. Polar residues predominate over residues 1445-1459; the sequence is SRNTRSASAQKTVAA. Over residues 1533 to 1546 the composition is skewed to low complexity; the sequence is AAASTSSSRAGSVT. A compositionally biased stretch (acidic residues) spans 1566 to 1576; sequence VQEEEEEEAEE. Residues 1581–1606 are compositionally biased toward polar residues; it reads SRSTRSASVKNTTVDPSSSALASTKR. Residues 1601-1784 are important for nuclear localization; it reads LASTKRTTSR…LLRSARRAKQ (184 aa). The a.T hook 1 DNA-binding region spans 1630 to 1642; the sequence is TPKRGRPAKKDAG. Residues 1630-1784 are required for chromosome segregation, nuclear growth, nucleoplasmic accumulation and cell cycle timing, but not required for nuclear envelope and kinetochore localization; sequence TPKRGRPAKK…LLRSARRAKQ (155 aa). Residues 1716-1735 show a composition bias toward polar residues; that stretch reads AGTSKQSRSVTRSRASSIDV. Residues 1746–1758 constitute a DNA-binding region (a.T hook 2); the sequence is KRGRGRPPKTVLE.

In terms of tissue distribution, ubiquitously expressed (at protein level).

Its subcellular location is the nucleus. The protein resides in the nucleoplasm. It is found in the nucleus envelope. It localises to the nucleus inner membrane. The protein localises to the nuclear pore complex. Its subcellular location is the chromosome. The protein resides in the centromere. It is found in the kinetochore. In terms of biological role, nuclear envelope protein which has essential roles in assembly of nuclear pore complexes and in chromatin maintenance during the cell cycle. Appears to be a stable structural component of the nuclear envelope during interphase. In dividing cells, localizes to kinetochores during early stages of mitosis and then to chromatin during late mitosis. Important for several mitotic processes including chromosome condensation, kinetochore assembly, chromosome segregation and cell-cycle timing. In postmitotic cells, plays a role in the early steps of nuclear pore complex assembly by recruiting the nucleoporins npp-10 and npp-5 to chromatin. Also involved in meiotic chromosome segregation. May function downstream of the Ran GTPase signaling pathway. The sequence is that of Protein mel-28 from Caenorhabditis elegans.